The following is a 300-amino-acid chain: Protoheme IX farnesyltransferase (300 aa).

A run of 9 helical transmembrane segments spans residues 21-43, 45-65, 94-114, 117-137, 145-167, 171-193, 213-233, 235-255, and 272-292; these read PRVVELLLLTTVPTMILAQRGVP, PLSVLSVLLGGAMSAGAAGAF, ASLIFAWMLCVISVLWFLLFV, LSALLSAIAVFLYAFFYSIVL, IVWGGLAGCMPVLIAWAAVTGSI, AIVLFAVVFLWTPPHYWPLSIHY, LVVLQVLLYAFAVVACTLLLI, VAHMTPLYGLFSAVLGAWFVY, and AMHIFSLSNTYLSLVFLSVGI.

This sequence belongs to the UbiA prenyltransferase family. Protoheme IX farnesyltransferase subfamily.

The protein localises to the cell membrane. The catalysed reaction is heme b + (2E,6E)-farnesyl diphosphate + H2O = Fe(II)-heme o + diphosphate. It participates in porphyrin-containing compound metabolism; heme O biosynthesis; heme O from protoheme: step 1/1. Its function is as follows. Converts heme B (protoheme IX) to heme O by substitution of the vinyl group on carbon 2 of heme B porphyrin ring with a hydroxyethyl farnesyl side group. The sequence is that of Protoheme IX farnesyltransferase from Tropheryma whipplei (strain TW08/27) (Whipple's bacillus).